A 362-amino-acid chain; its full sequence is RING finger protein 32 (362 aa).

Residues 127–169 (CPICKEEFELRPQVLLSCSHVFHRACLQAFEKFTNKKTCPLCR) form an RING-type 1; atypical zinc finger. The region spanning 186-215 (RIKCVTRIQAYWRGYVVRKWYRNLRETVPP) is the IQ domain. The RING-type 2; atypical zinc-finger motif lies at 293-352 (CSICLAPLSPAGGQRVGAGQRSRETALLSCSHVFHHACLLALEEFSVGDRPPFHACPLCR).

The protein localises to the cytoplasm. Its function is as follows. May play a role in sperm formation. This is RING finger protein 32 (RNF32) from Macaca fascicularis (Crab-eating macaque).